Here is a 258-residue protein sequence, read N- to C-terminus: Acetylglutamate kinase (258 aa).

Residues 44 to 45 (GG), R66, and N158 each bind substrate. ATP-binding positions include 181–186 (DVSGIL) and 209–211 (IIT).

It belongs to the acetylglutamate kinase family. ArgB subfamily. Homodimer.

The protein resides in the cytoplasm. The enzyme catalyses N-acetyl-L-glutamate + ATP = N-acetyl-L-glutamyl 5-phosphate + ADP. It participates in amino-acid biosynthesis; L-arginine biosynthesis; N(2)-acetyl-L-ornithine from L-glutamate: step 2/4. In terms of biological role, catalyzes the ATP-dependent phosphorylation of N-acetyl-L-glutamate. The polypeptide is Acetylglutamate kinase (Salmonella paratyphi A (strain ATCC 9150 / SARB42)).